Consider the following 53-residue polypeptide: ATP synthase protein 8 (53 aa).

Residues 9-29 (WITSMLMFWISVSILFSTLWW) form a helical membrane-spanning segment.

It belongs to the ATPase protein 8 family. As to quaternary structure, F-type ATPases have 2 components, CF(1) - the catalytic core - and CF(0) - the membrane proton channel.

It localises to the mitochondrion membrane. Mitochondrial membrane ATP synthase (F(1)F(0) ATP synthase or Complex V) produces ATP from ADP in the presence of a proton gradient across the membrane which is generated by electron transport complexes of the respiratory chain. F-type ATPases consist of two structural domains, F(1) - containing the extramembraneous catalytic core and F(0) - containing the membrane proton channel, linked together by a central stalk and a peripheral stalk. During catalysis, ATP synthesis in the catalytic domain of F(1) is coupled via a rotary mechanism of the central stalk subunits to proton translocation. Part of the complex F(0) domain. Minor subunit located with subunit a in the membrane. In Lumbricus terrestris (Common earthworm), this protein is ATP synthase protein 8 (MT-ATP8).